The primary structure comprises 336 residues: TBC1 domain family member 21 (336 aa).

Residues 57–265 enclose the Rab-GAP TBC domain; it reads GLHPFVRTEA…RLWEVLLTGK (209 aa).

Interacts with ACTB. Interacts with ARMC12, TOMM20, DNAH7 and RAP1A. Interacts with RAB10. In terms of tissue distribution, expressed in round and elongated spermatids (at protein level). Expressed specifically in adult testis and very weakly in fetal brain.

The protein resides in the cytoplasmic vesicle. It is found in the secretory vesicle. The protein localises to the acrosome. Its subcellular location is the cytoplasm. It localises to the cytoskeleton. In terms of biological role, acts as a GTPase-activating protein for Rab family protein(s). Essential for the establishment of male fertility, and is required for both the production of normal sperm number and sperm function. Plays an important role in the formation of intact mitochondria, outer dense fibers and axoneme within the sperm tail. Essential for sperm mitochondrial sheath formation and for the interactions of ARMC12 with VDAC2 and VDAC3. May be involved in acrosome formation and cytoskeletal reorganization during spermiogenesis, possibly by regulating RAB3A activity. The polypeptide is TBC1 domain family member 21 (TBC1D21) (Homo sapiens (Human)).